The following is a 276-amino-acid chain: TIMELESS-interacting protein (276 aa).

Residues 1–54 form a disordered region; sequence MLEQEENGLFEIPDYEHVEDETFPPFPPPGSPERDPAEAEPDEGSGAPVPVPPK. The interaction with TIMELESS stretch occupies residues 64-140; sequence LDATRLTSER…KEVQTCLKRI (77 aa). A compositionally biased stretch (polar residues) spans 217 to 243; it reads SNSQSLENDVTVEESSTGENQEESNGL. Residues 217 to 276 are disordered; sequence SNSQSLENDVTVEESSTGENQEESNGLISADGPHDVPSASTQEEGQLEAEETQLDHPNLD. Position 219 is a phosphoserine (Ser-219). The residue at position 233 (Thr-233) is a Phosphothreonine.

It belongs to the CSM3 family. In terms of assembly, interacts with TIMELESS, which impairs TIMELESS self-association (via N-terminus). Associates with the MCM2-7 complex. Interacts with RPA2, PRDX2.

Its subcellular location is the cytoplasm. The protein localises to the nucleus. Plays an important role in the control of DNA replication and the maintenance of replication fork stability. Important for cell survival after DNA damage or replication stress. May be specifically required for the ATR-CHEK1 pathway in the replication checkpoint induced by hydroxyurea or ultraviolet light. Forms a complex with TIMELESS and this complex regulates DNA replication processes under both normal and stress conditions, stabilizes replication forks and influences both CHEK1 phosphorylation and the intra-S phase checkpoint in response to genotoxic stress. In Rattus norvegicus (Rat), this protein is TIMELESS-interacting protein (Tipin).